The chain runs to 209 residues: Large ribosomal subunit protein uL3 (209 aa).

It belongs to the universal ribosomal protein uL3 family. In terms of assembly, part of the 50S ribosomal subunit. Forms a cluster with proteins L14 and L19.

Its function is as follows. One of the primary rRNA binding proteins, it binds directly near the 3'-end of the 23S rRNA, where it nucleates assembly of the 50S subunit. In Pelobacter propionicus (strain DSM 2379 / NBRC 103807 / OttBd1), this protein is Large ribosomal subunit protein uL3.